The sequence spans 162 residues: MADPSFDIVSKVDTQEIDNAVNQTAKEIKTRFDFRDTGASAALSGESILLQANSEDRVKAVLDVLQEKFVKRGISLKSLEHGEPRQSGKEYKLTVTVQQGIADEKAKAIAKKIRADGPKGVQAQIQGDQLRVTGKKRDDLQRVIQLLKAEDFDVPLQFVNYR.

This sequence belongs to the YajQ family.

Nucleotide-binding protein. The polypeptide is Nucleotide-binding protein Franean1_6074 (Parafrankia sp. (strain EAN1pec)).